We begin with the raw amino-acid sequence, 110 residues long: UPF0132 membrane protein MJ1443 (110 aa).

The next 3 helical transmembrane spans lie at 15-35 (IEGA…YILE), 49-69 (IILF…PYGW), and 70-90 (MLSG…MYKA).

This sequence belongs to the UPF0132 family.

It localises to the cell membrane. This chain is UPF0132 membrane protein MJ1443, found in Methanocaldococcus jannaschii (strain ATCC 43067 / DSM 2661 / JAL-1 / JCM 10045 / NBRC 100440) (Methanococcus jannaschii).